Here is a 241-residue protein sequence, read N- to C-terminus: uncharacterized protein (241 aa).

7 helical membrane-spanning segments follow: residues 12–32 (ITEI…LLLL), 39–59 (LLWL…EMKF), 89–109 (VYDV…ICYT), 117–137 (YYTF…NCVV), 152–172 (LFEY…ATML), 180–200 (IHFY…WFVY), and 215–235 (YVEA…SPLI).

This sequence belongs to the mimivirus L68/R809 family.

The protein resides in the membrane. This is an uncharacterized protein from Acanthamoeba polyphaga mimivirus (APMV).